A 185-amino-acid polypeptide reads, in one-letter code: MIKDIIQNAEEKMKKTISVLKSDLSTMKAGRANPTMLDRIHVEYYGSMCPLSQVANVSAPEPRVLMITPWEKPLLKEIEKAILKSDLGLNPSSDGSIIRLVIPELTEETRKTLVKNVKKTGEEAKVAIRSIRKTANDKIKALKKDEDLSEDQVKKAEDEVQKKTDAVVKEIDSIIAAKEKEVLSV.

Belongs to the RRF family.

It localises to the cytoplasm. In terms of biological role, responsible for the release of ribosomes from messenger RNA at the termination of protein biosynthesis. May increase the efficiency of translation by recycling ribosomes from one round of translation to another. This chain is Ribosome-recycling factor, found in Clostridium beijerinckii (strain ATCC 51743 / NCIMB 8052) (Clostridium acetobutylicum).